A 799-amino-acid polypeptide reads, in one-letter code: Valine--tRNA ligase (799 aa).

Lys536 contributes to the ATP binding site.

Belongs to the class-I aminoacyl-tRNA synthetase family. ValS type 2 subfamily.

It is found in the cytoplasm. The catalysed reaction is tRNA(Val) + L-valine + ATP = L-valyl-tRNA(Val) + AMP + diphosphate. Functionally, catalyzes the attachment of valine to tRNA(Val). As ValRS can inadvertently accommodate and process structurally similar amino acids such as threonine, to avoid such errors, it has a 'posttransfer' editing activity that hydrolyzes mischarged Thr-tRNA(Val) in a tRNA-dependent manner. The sequence is that of Valine--tRNA ligase (valS) from Pyrobaculum aerophilum (strain ATCC 51768 / DSM 7523 / JCM 9630 / CIP 104966 / NBRC 100827 / IM2).